An 833-amino-acid polypeptide reads, in one-letter code: Probable glucan 1,3-beta-glucosidase D (833 aa).

Residues 1–33 show a composition bias toward basic and acidic residues; it reads MPTHSRSRDRYGGRDSDREARYDYDYARRRYAT. A disordered region spans residues 1–228; that stretch reads MPTHSRSRDR…RKRQKKLAVV (228 aa). At 1-305 the chain is on the cytoplasmic side; sequence MPTHSRSRDR…GGRPFWKRKR (305 aa). A compositionally biased stretch (acidic residues) spans 34 to 45; that stretch reads DDDDDYDDDELE. 2 stretches are compositionally biased toward basic and acidic residues: residues 46–75 and 97–172; these read HDLT…RDAE and YGDD…ETAA. Residues 183–196 are compositionally biased toward low complexity; that stretch reads SASHLLSADALAKL. Over residues 200 to 217 the composition is skewed to basic and acidic residues; it reads YEKEERRKREIAKDAAKA. A helical; Signal-anchor for type II membrane protein membrane pass occupies residues 306–326; it reads WIGLGALIIILVIVIPVAVVV. At 327 to 833 the chain is on the extracellular side; sequence SKKHDNKSDP…PDFGDLPEYY (507 aa). Positions 331 to 353 are disordered; it reads DNKSDPADSQGTSPGKSNLDGLS. Asparagine 332 is a glycosylation site (N-linked (GlcNAc...) asparagine). Residues 337 to 346 are compositionally biased toward polar residues; that stretch reads ADSQGTSPGK. N-linked (GlcNAc...) asparagine glycosylation is found at asparagine 378, asparagine 383, asparagine 395, asparagine 548, asparagine 560, and asparagine 569. Catalysis depends on glutamate 599, which acts as the Proton donor. Asparagine 638, asparagine 671, and asparagine 691 each carry an N-linked (GlcNAc...) asparagine glycan. The active-site Nucleophile is glutamate 704.

Belongs to the glycosyl hydrolase 5 (cellulase A) family.

The protein resides in the cell membrane. It catalyses the reaction Successive hydrolysis of beta-D-glucose units from the non-reducing ends of (1-&gt;3)-beta-D-glucans, releasing alpha-glucose.. In terms of biological role, glucosidase involved in the degradation of cellulosic biomass. Active on lichenan. This chain is Probable glucan 1,3-beta-glucosidase D (exgD), found in Aspergillus fumigatus (strain CBS 144.89 / FGSC A1163 / CEA10) (Neosartorya fumigata).